The sequence spans 266 residues: Translation initiation factor 2 subunit alpha (266 aa).

The S1 motif domain maps to 12–83 (GEILIATVKQ…RKGTVDVSLK (72 aa)).

It belongs to the eIF-2-alpha family. In terms of assembly, heterotrimer composed of an alpha, a beta and a gamma chain.

Its function is as follows. eIF-2 functions in the early steps of protein synthesis by forming a ternary complex with GTP and initiator tRNA. The protein is Translation initiation factor 2 subunit alpha of Saccharolobus solfataricus (strain ATCC 35092 / DSM 1617 / JCM 11322 / P2) (Sulfolobus solfataricus).